Consider the following 695-residue polypeptide: Scarecrow-like protein 31 (695 aa).

Disordered regions lie at residues 105 to 136 (VISDSQTQSSIPNNSITTSSSSNSGDYSNSSN) and 234 to 260 (ISKTRKNHHEREEEEDDLEEARRRSKQ). Low complexity predominate over residues 113–136 (SSIPNNSITTSSSSNSGDYSNSSN). Positions 233-266 (AISKTRKNHHEREEEEDDLEEARRRSKQFAVNEE) form a coiled coil. The 388-residue stretch at 306 to 693 (AKKKSRAVDF…RILFSSSCWV (388 aa)) folds into the GRAS domain. The interval 313–377 (VDFRTLLTLC…EGSTGTMIQS (65 aa)) is leucine repeat I (LRI). Residues 396-461 (YSVFLSASPF…PGLRKLRITG (66 aa)) are VHIID. The VHIID signature appears at 427–431 (LHIVD). The interval 477–509 (DTGRRLTEYCKRFGVPFEYNAIASKNWETIKME) is leucine repeat II (LRII). The interval 519-614 (LAVNAVLRFK…GEFYGREVMN (96 aa)) is PFYRE. The segment at 617 to 693 (ACEGVDRVER…RILFSSSCWV (77 aa)) is SAW.

The protein belongs to the GRAS family. Expressed in seedlings, roots, cotyledons, leaves and sepals.

It localises to the nucleus. Its function is as follows. Probable transcription factor involved in plant development. This chain is Scarecrow-like protein 31 (SCL31), found in Arabidopsis thaliana (Mouse-ear cress).